We begin with the raw amino-acid sequence, 468 residues long: MKHRIQHIHFVGVGGSGMSGIAEVLLNLGYTVSGSDLSESTVTRRLADLGLKVSIGHAAENVADADAIVTSTAVAGDNPEVIAARLARIPVVPRAVMLAELMRLKRGIAVAGTHGKTTTTSLVASVLAAGGLDPTFVIGGRLNSAGANAQLGQGEFIVVEADESDASFLNLLPVMAIITNIDADHMDTYGHDVARLKSAFIEFTQRLPFYGSAVLCADDANVREIMPFVSRPITTYGLSSDAQVRAENVQADGTRMRFSVRRQGREQDLPTLEVELNLPGLHNVRNALAAIAVASELGVADAAICQALAGFKGVGRRFTQWGEFPVAEAQGGGRYSVIDDYGHHPVEMAATLAAARGAWPDRRIVLAFQPHRYTRTRDCFEDFVRVLGTADAVLLTEVYAAGEAPLVAADGRALARALRVAGKVEPLFVEDVAALPQAVRDFMRDGDVLILMGAGSISKVPSQLGEHA.

112-118 (GTHGKTT) contacts ATP.

This sequence belongs to the MurCDEF family.

It is found in the cytoplasm. It catalyses the reaction UDP-N-acetyl-alpha-D-muramate + L-alanine + ATP = UDP-N-acetyl-alpha-D-muramoyl-L-alanine + ADP + phosphate + H(+). It participates in cell wall biogenesis; peptidoglycan biosynthesis. Functionally, cell wall formation. The protein is UDP-N-acetylmuramate--L-alanine ligase of Bordetella avium (strain 197N).